We begin with the raw amino-acid sequence, 296 residues long: Protoheme IX farnesyltransferase (296 aa).

9 helical membrane passes run 11–31, 35–55, 84–104, 107–127, 132–152, 162–182, 208–228, 229–249, and 264–284; these read PGIIFGNLISVIGGFLLAAQG, YPLFLATLVGVSLVVASGCVF, VTLVYASLLGIAGFALLYIAA, LAMWLAVMGFVVYVGVYSLYM, VYGTLIGSLSGAAPPVIGYCA, LILLLIFSLWQMPHSYAIAIF, ITLYIVAFAVATLMLSLGGYA, GYKYLIVAAAVSVWWLGMALS, and LFVFSIVAITSLSVMMSVDSM.

Belongs to the UbiA prenyltransferase family. Protoheme IX farnesyltransferase subfamily.

It localises to the cell inner membrane. It carries out the reaction heme b + (2E,6E)-farnesyl diphosphate + H2O = Fe(II)-heme o + diphosphate. It functions in the pathway porphyrin-containing compound metabolism; heme O biosynthesis; heme O from protoheme: step 1/1. Functionally, converts heme B (protoheme IX) to heme O by substitution of the vinyl group on carbon 2 of heme B porphyrin ring with a hydroxyethyl farnesyl side group. This chain is Protoheme IX farnesyltransferase, found in Pectobacterium carotovorum subsp. carotovorum (strain PC1).